The sequence spans 2455 residues: Ectopic P granules protein 5 homolog (2455 aa).

Positions 1–42 (MATLEKPKKEKSKKSRNRVPIEKEEEEPAELSTSEEQRPAEN) are disordered. Serine 44 bears the Phosphoserine mark. A disordered region spans residues 77 to 105 (VTSQEPEGTQEPTETEAQPSAPSAPPSTT). Residues 80–97 (QEPEGTQEPTETEAQPSA) show a composition bias toward low complexity. The residue at position 467 (serine 467) is a Phosphoserine.

Belongs to the EPG5 family.

It is found in the cytoplasm. The protein localises to the perinuclear region. Its subcellular location is the lysosome. Functionally, involved in autophagy. Plays a role in late steps of autophagy. This chain is Ectopic P granules protein 5 homolog, found in Drosophila melanogaster (Fruit fly).